Here is a 256-residue protein sequence, read N- to C-terminus: Protein FixA (256 aa).

Belongs to the ETF beta-subunit/FixA family. As to quaternary structure, heterodimer of FixA and FixB.

Its pathway is amine and polyamine metabolism; carnitine metabolism. In terms of biological role, required for anaerobic carnitine reduction. May bring reductant to CaiA. The sequence is that of Protein FixA from Escherichia coli O139:H28 (strain E24377A / ETEC).